A 686-amino-acid chain; its full sequence is ATP-dependent zinc metalloprotease FtsH 2 (686 aa).

The Cytoplasmic portion of the chain corresponds to 1–11 (MKKNIKDIFKN). A helical membrane pass occupies residues 12 to 32 (FNIFWFCFIFLLLSLLYCLIM). Residues 33 to 178 (MEISHQHDNN…LQRIPYQPYF (146 aa)) lie on the Extracellular side of the membrane. The helical transmembrane segment at 179–199 (GFAPFISAVNICILIIIFYFI) threads the bilayer. Topologically, residues 200–686 (YNSIEKTSAQ…QKSEKEDCNK (487 aa)) are cytoplasmic. Position 272–279 (272–279 (GPPGVGKT)) interacts with ATP. Residue histidine 493 participates in Zn(2+) binding. Glutamate 494 is a catalytic residue. Residues histidine 497 and aspartate 569 each contribute to the Zn(2+) site.

It in the central section; belongs to the AAA ATPase family. The protein in the C-terminal section; belongs to the peptidase M41 family. In terms of assembly, homohexamer. Zn(2+) serves as cofactor.

Its subcellular location is the cell membrane. Acts as a processive, ATP-dependent zinc metallopeptidase for both cytoplasmic and membrane proteins. Plays a role in the quality control of integral membrane proteins. This Phytoplasma mali (strain AT) protein is ATP-dependent zinc metalloprotease FtsH 2.